A 213-amino-acid polypeptide reads, in one-letter code: Neuromodulin (213 aa).

Residues 1-213 (MLCCIRRTKP…AEEAGKDQNV (213 aa)) form a disordered region. 2 S-palmitoyl cysteine lipidation sites follow: Cys-3 and Cys-4. Over residues 9–33 (KPVEKNEEADQEIKQDGTKPEENAH) the composition is skewed to basic and acidic residues. One can recognise an IQ domain in the interval 32 to 61 (AHKAATKIQASFRGHITRKKMKDEDKDGEN). A compositionally biased stretch (acidic residues) spans 57–73 (KDGENDTAPDESAETEE). A compositionally biased stretch (basic and acidic residues) spans 74 to 86 (KEERVSPSEEKPV). Positions 102–122 (PNSPAAEAPPTAATDSAPSDT) are enriched in low complexity. A compositionally biased stretch (acidic residues) spans 157-169 (EKEEEEEEEEEEE). A compositionally biased stretch (basic and acidic residues) spans 191–213 (QTDKKEALDDSKPAEEAGKDQNV).

It belongs to the neuromodulin family. As to quaternary structure, binds calmodulin with a greater affinity in the absence of Ca(2+) than in its presence. Palmitoylated. Palmitoylation is essential for plasma membrane association.

Its subcellular location is the cell membrane. It is found in the cell projection. It localises to the growth cone membrane. The protein resides in the synapse. The protein localises to the filopodium membrane. Its function is as follows. This protein is associated with nerve growth. It is a major component of the motile 'growth cones' that form the tips of elongating axons. Plays a role in axonal and dendritic filopodia induction. This chain is Neuromodulin (gap43), found in Carassius auratus (Goldfish).